Reading from the N-terminus, the 255-residue chain is UPF0246 protein DP0358 (255 aa).

This sequence belongs to the UPF0246 family.

This Desulfotalea psychrophila (strain LSv54 / DSM 12343) protein is UPF0246 protein DP0358.